The primary structure comprises 377 residues: Succinyl-diaminopimelate desuccinylase (377 aa).

A Zn(2+)-binding site is contributed by His68. Residue Asp70 is part of the active site. Asp101 contributes to the Zn(2+) binding site. The active-site Proton acceptor is the Glu135. Positions 136, 164, and 350 each coordinate Zn(2+).

This sequence belongs to the peptidase M20A family. DapE subfamily. Homodimer. Requires Zn(2+) as cofactor. Co(2+) is required as a cofactor.

It carries out the reaction N-succinyl-(2S,6S)-2,6-diaminopimelate + H2O = (2S,6S)-2,6-diaminopimelate + succinate. The protein operates within amino-acid biosynthesis; L-lysine biosynthesis via DAP pathway; LL-2,6-diaminopimelate from (S)-tetrahydrodipicolinate (succinylase route): step 3/3. Catalyzes the hydrolysis of N-succinyl-L,L-diaminopimelic acid (SDAP), forming succinate and LL-2,6-diaminopimelate (DAP), an intermediate involved in the bacterial biosynthesis of lysine and meso-diaminopimelic acid, an essential component of bacterial cell walls. This is Succinyl-diaminopimelate desuccinylase from Aliivibrio salmonicida (strain LFI1238) (Vibrio salmonicida (strain LFI1238)).